Consider the following 290-residue polypeptide: ATP synthase gamma chain (290 aa).

Belongs to the ATPase gamma chain family. In terms of assembly, F-type ATPases have 2 components, CF(1) - the catalytic core - and CF(0) - the membrane proton channel. CF(1) has five subunits: alpha(3), beta(3), gamma(1), delta(1), epsilon(1). CF(0) has three main subunits: a, b and c.

Its subcellular location is the cell inner membrane. Functionally, produces ATP from ADP in the presence of a proton gradient across the membrane. The gamma chain is believed to be important in regulating ATPase activity and the flow of protons through the CF(0) complex. This Paracoccus denitrificans (strain Pd 1222) protein is ATP synthase gamma chain.